Consider the following 179-residue polypeptide: Auxin-responsive protein IAA15 (179 aa).

The EAR-like (transcriptional repression) motif lies at 21–25 (LTLAL). In terms of domain architecture, PB1 spans 86–173 (RKYVKVALDG…SCKRMRLMKT (88 aa)).

This sequence belongs to the Aux/IAA family. Homodimers and heterodimers.

The protein resides in the nucleus. In terms of biological role, aux/IAA proteins are short-lived transcriptional factors that function as repressors of early auxin response genes at low auxin concentrations. Repression is thought to result from the interaction with auxin response factors (ARFs), proteins that bind to the auxin-responsive promoter element (AuxRE). Formation of heterodimers with ARF proteins may alter their ability to modulate early auxin response genes expression. This Arabidopsis thaliana (Mouse-ear cress) protein is Auxin-responsive protein IAA15 (IAA15).